The following is a 377-amino-acid chain: MFFTEQHELIRKLARDFAEQEIEPIADEVDKTAEFPKEIVKKMAQNGFFGIKMPKEYGGAGADNRAYVTIMEEISRASGVAGIYLSSPNSLLGTPFLLVGTDEQKEKYLKPMIRGEKTLAFALTEPGAGSDAGAVATTAREEGDYYILNGRKTFITGAPISDNIIVFAKTDMSKGTKGITTFIVDSKQEGVSFGKPEDKMGMIGCPTSDIILENVKVHKSDILGELNKGFITAMKTLSVGRIGVAAQALGIAQAAVDEAVKYAKQRKQFNRPIAKFQAIQFKLANMETKLNAAKLLVYNAAYKMDCGEKADKEASMAKYFAAESAIQIVNDALQIHGGYGYIKDYKIERLYRDVRVIAIYEGTSEVQQMVIASNLLK.

FAD-binding positions include 121–130, 154–156, arginine 266, glutamine 277, and 334–338; these read FALTEPGAGS, FIT, and QIHGG. Glutamate 361 (proton acceptor) is an active-site residue. 363–365 is a binding site for FAD; it reads TSE.

It belongs to the acyl-CoA dehydrogenase family. The cofactor is FAD.

It catalyses the reaction 3-phenylpropanoate + oxidized [electron-transfer flavoprotein] + H(+) = (E)-cinnamate + reduced [electron-transfer flavoprotein]. The catalysed reaction is phloretate + oxidized [electron-transfer flavoprotein] + H(+) = (E)-4-coumarate + reduced [electron-transfer flavoprotein]. It carries out the reaction indole-3-propanoate + oxidized [electron-transfer flavoprotein] + H(+) = (E)-3-(indol-3-yl)acrylate + reduced [electron-transfer flavoprotein]. Its pathway is amino-acid degradation. Its function is as follows. Essential for the reductive metabolism of L-phenylalanine, L-tyrosine and L-tryptophan. Catalyzes the reduction of phenylacrylic acid to phenylpropionic acid, 4-hydroxy-phenylacrylic acid to 4-hydroxy-phenylpropionic acid, and indoleacrylic acid to indolepropionic acid. In Clostridium sporogenes (strain ATCC 15579), this protein is 3-(aryl)acrylate reductase.